Reading from the N-terminus, the 370-residue chain is Probable phosphoserine aminotransferase (370 aa).

Residue Arg45 participates in L-glutamate binding. Pyridoxal 5'-phosphate-binding positions include 79 to 80, Trp105, Thr154, Asp175, and Gln198; that span reads GT. Lys199 carries the N6-(pyridoxal phosphate)lysine modification. Residue 240–241 coordinates pyridoxal 5'-phosphate; sequence NT.

This sequence belongs to the class-V pyridoxal-phosphate-dependent aminotransferase family. SerC subfamily. As to quaternary structure, homodimer. Pyridoxal 5'-phosphate is required as a cofactor.

The catalysed reaction is O-phospho-L-serine + 2-oxoglutarate = 3-phosphooxypyruvate + L-glutamate. It catalyses the reaction 4-(phosphooxy)-L-threonine + 2-oxoglutarate = (R)-3-hydroxy-2-oxo-4-phosphooxybutanoate + L-glutamate. It functions in the pathway amino-acid biosynthesis; L-serine biosynthesis; L-serine from 3-phospho-D-glycerate: step 2/3. It participates in cofactor biosynthesis; pyridoxine 5'-phosphate biosynthesis; pyridoxine 5'-phosphate from D-erythrose 4-phosphate: step 3/5. Functionally, catalyzes the reversible conversion of 3-phosphohydroxypyruvate to phosphoserine and of 3-hydroxy-2-oxo-4-phosphonooxybutanoate to phosphohydroxythreonine. In Caenorhabditis elegans, this protein is Probable phosphoserine aminotransferase.